Here is a 289-residue protein sequence, read N- to C-terminus: Porin (289 aa).

As to quaternary structure, homotrimer.

The protein resides in the cell outer membrane. In terms of biological role, forms channels that allow the passive diffusion of small hydrophilic solutes up to an exclusion limit of about 0.6 kDa. The protein is Porin (opmA) of Fuscovulum blasticum (Rhodobacter blasticus).